Here is a 347-residue protein sequence, read N- to C-terminus: Epimerase family protein SDR39U1 homolog, chloroplastic (347 aa).

The transit peptide at 1–37 (MELLCSPTSLSSSFALSSALLVPRSFSMPGTRRFMVL) directs the protein to the chloroplast. NADP(+) contacts are provided by residues 54 to 57 (TGFI), 76 to 77 (TR), 115 to 119 (LAGLP), and Arg-136.

As to quaternary structure, can form homodimers. In terms of tissue distribution, expressed in leaves, stems and flower buds.

It localises to the plastid. The protein localises to the chloroplast inner membrane. Its subcellular location is the chloroplast. Functionally, putative NADP-dependent oxidoreductase that acts as a positive regulator of chloroplast division. May play a role at an early stage of the division process. This Arabidopsis thaliana (Mouse-ear cress) protein is Epimerase family protein SDR39U1 homolog, chloroplastic.